Consider the following 501-residue polypeptide: 2,3-bisphosphoglycerate-independent phosphoglycerate mutase (501 aa).

Positions 10 and 60 each coordinate Mn(2+). Ser60 functions as the Phosphoserine intermediate in the catalytic mechanism. Residues His121, 151–152 (RD), Arg182, Arg188, 256–259 (RPDR), and Lys329 each bind substrate. The Mn(2+) site is built by Asp394, His398, Asp435, His436, and His453.

It belongs to the BPG-independent phosphoglycerate mutase family. In terms of assembly, monomer. Requires Mn(2+) as cofactor.

It carries out the reaction (2R)-2-phosphoglycerate = (2R)-3-phosphoglycerate. It participates in carbohydrate degradation; glycolysis; pyruvate from D-glyceraldehyde 3-phosphate: step 3/5. Its function is as follows. Catalyzes the interconversion of 2-phosphoglycerate and 3-phosphoglycerate. This is 2,3-bisphosphoglycerate-independent phosphoglycerate mutase from Mycoplasmopsis synoviae (strain 53) (Mycoplasma synoviae).